A 441-amino-acid polypeptide reads, in one-letter code: MSPKPDIRTAMNKLENPLRDDVAGPAPRHQTTQVMVGDVAVGGGAPIVVQSMTNTDTADVEGTIKQIAALARAGSEMVRITVDREEAAAAVPHIRDGIRKLGLTTPIIGDFHYIGHKLLAEYPACAEALDKYRINPGNVGFKNKRDTQFADIVEIAIKNNKAVRIGANWGSLDQELLTKLMDENAASANPRDVRAVTREAMVQSALLSAARAEEIGLPKNKMILSAKVSAVQDLIAVYQDLASRSDYAIHLGLTEAGMGSKGIVASSAALGILLQQGIGDTIRISLTPEPGGDRTREVQVGQELLQTMGFRTFVPLVAACPGCGRTTSTTFQELARSIQDFIRDEMPEWRSRYPGVENLNVAVMGCIVNGPGESKHANIGISLPGTGETPAAPVFVDGEKFRTLRGENIAADFKALVIDYIEQRYGATPKPDAAQMVPAAE.

[4Fe-4S] cluster-binding residues include Cys320, Cys323, Cys366, and Glu373.

It belongs to the IspG family. The cofactor is [4Fe-4S] cluster.

It carries out the reaction (2E)-4-hydroxy-3-methylbut-2-enyl diphosphate + oxidized [flavodoxin] + H2O + 2 H(+) = 2-C-methyl-D-erythritol 2,4-cyclic diphosphate + reduced [flavodoxin]. Its pathway is isoprenoid biosynthesis; isopentenyl diphosphate biosynthesis via DXP pathway; isopentenyl diphosphate from 1-deoxy-D-xylulose 5-phosphate: step 5/6. Converts 2C-methyl-D-erythritol 2,4-cyclodiphosphate (ME-2,4cPP) into 1-hydroxy-2-methyl-2-(E)-butenyl 4-diphosphate. The chain is 4-hydroxy-3-methylbut-2-en-1-yl diphosphate synthase (flavodoxin) from Rhodopseudomonas palustris (strain ATCC BAA-98 / CGA009).